The primary structure comprises 303 residues: Sulfotransferase 6B1 (303 aa).

65-70 (KCGSNW) contacts 3'-phosphoadenylyl sulfate. Residue H118 is the Proton acceptor of the active site. Residues R140, S148, Y203, 237–242 (STFLAM), and 259–261 (RKG) each bind 3'-phosphoadenylyl sulfate.

It belongs to the sulfotransferase 1 family. In terms of tissue distribution, expressed in brain, heart, kidney, thymus, lung, liver and testis.

Its subcellular location is the cytoplasm. It is found in the cytosol. It carries out the reaction thyroxine + 3'-phosphoadenylyl sulfate = thyroxine sulfate + adenosine 3',5'-bisphosphate + H(+). Sulfotransferase that utilizes 3'-phospho-5'-adenylyl sulfate (PAPS) as sulfonate donor to catalyze the sulfate conjugation of thyroxine. Involved in the metabolism of thyroxine. This Mus musculus (Mouse) protein is Sulfotransferase 6B1 (Sult6b1).